Here is a 303-residue protein sequence, read N- to C-terminus: Thioesterase poxG (303 aa).

Belongs to the lcsJ thioesterase family.

The protein operates within secondary metabolite biosynthesis. Thioesterase; part of the gene cluster that mediates the biosynthesis of oxaleimides, cytotoxic compounds containing an unusual disubstituted succinimide moiety. The first step of the pathway is provided by the HR-PKS poxF that serves in a new mode of collaborative biosynthesis with the PKS-NRPS poxE, by providing the olefin containing amino acid substrate via the synthesis of an ACP-bound dec-4-enoate. The cytochrome P450 monooxygenase poxM-catalyzed oxidation at the alpha-position creates the enzyme-bound 2-hydroxydec-4-enoyl-ACP thioester, which may be prone to spontaneous hydrolysis to yield 2-hydroxydec-4-enoic acid due to increased electrophilicity of the carbonyl. 2-hydroxydec-4-enoic acid can then be further oxidized by poxM to yield the alpha-ketoacid 2-oxodec-4-enoicacid, which is reductively aminated by the aminotransferase poxL to yield (S,E)-2-aminodec-4-enoic acid. The Hybrid PKS-NRPS synthetase poxE then performs condensation between the octaketide product of its PKS modules and the amino group of (S,E)-2-aminodec-4-enoic acid which is activated and incorporated by the adenylation domain. The resulting aminoacyl product can be cyclized by the Diels-Alderase PoxQ and reductively released by the reductive (R) domain of poxE to yield an aldehyde intermediate. The released aldehyde is then substrate for a Knoevenagel condensation by the hydrolyase poxO followed by an oxidation at the 5-position of the pyrrolidone ring. The presence of the olefin from the amino acid building block allows for migration of the substituted allyl group to occur. This allylic transposition reaction takes place in a conjugate addition, semipinacol-like fashion to yield a succinimide intermediate. Iterative two-electron oxidations of the C7 methyl of the succinimide intermediate to the carboxylic acid can be catalyzed by one of two remaining cytochrome P450 monooxygenasess poxC or poxD to yield oxaleimide A. Subsequent oxidation yields the maleimide scaffold oxaleimide I. Both oxaleimide A and oxaleimide I can undergo oxidative modifications in the decalin ring to yield the series of products oxaleimides B to H. The chain is Thioesterase poxG from Penicillium oxalicum.